The chain runs to 208 residues: Probable GTP-binding protein EngB (208 aa).

Residues 23-205 (LTSEMVVLGR…RQTLLKYLLT (183 aa)) enclose the EngB-type G domain. Residues 31 to 38 (GRSNVGKS), 57 to 61 (GKTRL), 84 to 87 (DLPG), 154 to 157 (TKFD), and 182 to 184 (FNA) each bind GTP. 2 residues coordinate Mg(2+): S38 and T59.

This sequence belongs to the TRAFAC class TrmE-Era-EngA-EngB-Septin-like GTPase superfamily. EngB GTPase family. Requires Mg(2+) as cofactor.

Necessary for normal cell division and for the maintenance of normal septation. The protein is Probable GTP-binding protein EngB of Helicobacter acinonychis (strain Sheeba).